The chain runs to 896 residues: Alanine--tRNA ligase (896 aa).

Residues His580, His584, Cys683, and His687 each coordinate Zn(2+).

This sequence belongs to the class-II aminoacyl-tRNA synthetase family. Zn(2+) is required as a cofactor.

The protein localises to the cytoplasm. The catalysed reaction is tRNA(Ala) + L-alanine + ATP = L-alanyl-tRNA(Ala) + AMP + diphosphate. Catalyzes the attachment of alanine to tRNA(Ala) in a two-step reaction: alanine is first activated by ATP to form Ala-AMP and then transferred to the acceptor end of tRNA(Ala). Also edits incorrectly charged Ser-tRNA(Ala) and Gly-tRNA(Ala) via its editing domain. The polypeptide is Alanine--tRNA ligase (Mycolicibacterium smegmatis (strain ATCC 700084 / mc(2)155) (Mycobacterium smegmatis)).